The chain runs to 1213 residues: METTEEVVAPATTQQPATEVGSAKPTTSTYSKKQKKPKATTTTTTTDGTTPTHNEHASAKDPRKAQDDQVMGTNNSSIVSKRSVEKLYYPNEPHFFRFFVKKFQRRAPLINRGYHFRLHVIDVLVRNFLQEQRTGDAKGKRKVVVNLGCGSDVLPWQCLARYPDACRSGEKDGAKFVDVDFPDLIERKKRTVLETPELLGPLTNVVVPEFAPVPSTPAATTTAAATTTTTTELKTTAATASSTSTEAPQKPKKSPKPKDKSKAARAPAPTTAPTGIVFTSDQYVQIGCDLRDLATLQDSLTRAVGGDLSSCTFLFVAEVSITYMETPGADAVIQWASSLGDSEFVLLEQLLPSGPTHPFASTMLSHFHKLNTPIKSVDVYPTVASQVERFRSRGWGSGDVRVWTLWEAWADAEDTFVNAAERRRLDEVEPFDEWEEFALFASHYCVVRARTVARDGQNKKKERGIPNGRELGLPVEKVKVRWDDVPGQRGQRRFAAGAVLTSSSPSSEKKEEVKLLNVMGLGTKSRLQNCDVYGRKKVGDADEADGTDEEKTAVPFTFREGGPSTRMCHSLTDFGTAQLLVGGRASPSTPLKDCWLLEKTNGSESEWAWKRTNDLPIPLYRHSVTRLGKTDMALLAGGRGVADIFPDWLLYEPKLGWIRCEIAGDVKPTSVYGATLACLRQESDSFSGVFTGGLSDDGLIADQLLAWNLDVSNSSRPVVTFVPLQVKSGDDGREEALSRLLLTRFGASCLPQSRTDFLVFGGVIKDHLLDMEDEILLCSLKGDGELTITRRLVPEAANAKSPSHPGPLLLVGTSPVVTPDDGSLMIVGGGATCFSMGTFWNKGISTLELALPAAVENEASPIPAYGWVHEKTVDIIPGEPRSLPLRNQAPNGAEGNANGSVSVRIQPIPRVRLENAEDFARIVREGRPVVLEGLNLGDCVSQWGNGDYVAKKVGTDRKVVIHESTTPAMDFTTKNFRYVTTEFGDFMRRVEKGDRLYLRALSTDKPTEKPAVLSDDFPSLATDFVLPPELALVGDRLFSSVLRVSGPVNMWLHYDVMANVYCQIGGSKRMILFPPSDVEHLGFAPGASSSSIDVFSTLFGESSDSRYLAQVTHPHEAVMTPGDVLFLPPLWLHTATPTSDSSIAVNVFFRDLEGGCYAAGKDVYGNRDLAAYEKGRTDLTRIANSFQKLPAEAREFYLLRLADELRRKAKGAQ.

Composition is skewed to low complexity over residues 1–13 (METT…PATT) and 39–52 (ATTT…TTPT). Positions 1–76 (METTEEVVAP…DDQVMGTNNS (76 aa)) are disordered. Positions 53-67 (HNEHASAKDPRKAQD) are enriched in basic and acidic residues. The S-adenosyl-L-methionine site is built by arginine 117, glycine 148, and aspartate 180. Residues 215-248 (STPAATTTAAATTTTTTELKTTAATASSTSTEAP) are compositionally biased toward low complexity. A disordered region spans residues 215–272 (STPAATTTAAATTTTTTELKTTAATASSTSTEAPQKPKKSPKPKDKSKAARAPAPTTA). S-adenosyl-L-methionine contacts are provided by residues 289–290 (DL) and glutamate 318. Residues 879–900 (EPRSLPLRNQAPNGAEGNANGS) form a disordered region. Positions 1006–1166 (PTEKPAVLSD…YAAGKDVYGN (161 aa)) constitute a JmjC domain.

It belongs to the methyltransferase superfamily. LCMT family.

The enzyme catalyses 7-[(3S)-3-amino-3-carboxypropyl]wyosine(37) in tRNA(Phe) + S-adenosyl-L-methionine = 7-[(3S)-(3-amino-3-methoxycarbonyl)propyl]wyosine(37) in tRNA(Phe) + S-adenosyl-L-homocysteine. It catalyses the reaction 7-[(3S)-(3-amino-3-methoxycarbonyl)propyl]wyosine(37) in tRNA(Phe) + S-adenosyl-L-methionine + CO2 = wybutosine(37) in tRNA(Phe) + S-adenosyl-L-homocysteine + 2 H(+). The protein operates within tRNA modification; wybutosine-tRNA(Phe) biosynthesis. Functionally, probable S-adenosyl-L-methionine-dependent methyltransferase that acts as a component of the wybutosine biosynthesis pathway. Wybutosine is a hyper modified guanosine with a tricyclic base found at the 3'-position adjacent to the anticodon of eukaryotic phenylalanine tRNA. May methylate the carboxyl group of leucine residues to form alpha-leucine ester residues. The protein is tRNA wybutosine-synthesizing protein 4 (lcm-2) of Neurospora crassa (strain ATCC 24698 / 74-OR23-1A / CBS 708.71 / DSM 1257 / FGSC 987).